Consider the following 342-residue polypeptide: Maltose regulon regulatory protein MalI (342 aa).

Residues 7–61 form the HTH lacI-type domain; the sequence is ITIHDVALAAGVSVSTVSLVLSGKGRISTATGERVNAAIEELGFVRNRQASALRG. Positions 9 to 28 form a DNA-binding region, H-T-H motif; it reads IHDVALAAGVSVSTVSLVLS.

Functionally, repressor for the malX and malY genes. Also regulates its own expression. Binds maltose as an inducer. The sequence is that of Maltose regulon regulatory protein MalI (malI) from Escherichia coli (strain K12).